A 162-amino-acid chain; its full sequence is Endoribonuclease YbeY (162 aa).

His117, His121, and His127 together coordinate Zn(2+).

Belongs to the endoribonuclease YbeY family. Zn(2+) is required as a cofactor.

Its subcellular location is the cytoplasm. Its function is as follows. Single strand-specific metallo-endoribonuclease involved in late-stage 70S ribosome quality control and in maturation of the 3' terminus of the 16S rRNA. The chain is Endoribonuclease YbeY from Francisella tularensis subsp. novicida (strain U112).